The sequence spans 468 residues: Glutamate--tRNA ligase (468 aa).

The short motif at 12-22 (PSPTGFIHLGN) is the 'HIGH' region element. The 'KMSKS' region signature appears at 244-248 (KMSKR). Lys-247 provides a ligand contact to ATP.

It belongs to the class-I aminoacyl-tRNA synthetase family. Glutamate--tRNA ligase type 1 subfamily. In terms of assembly, monomer.

The protein localises to the cytoplasm. It carries out the reaction tRNA(Glu) + L-glutamate + ATP = L-glutamyl-tRNA(Glu) + AMP + diphosphate. Its function is as follows. Catalyzes the attachment of glutamate to tRNA(Glu) in a two-step reaction: glutamate is first activated by ATP to form Glu-AMP and then transferred to the acceptor end of tRNA(Glu). The sequence is that of Glutamate--tRNA ligase from Polynucleobacter necessarius subsp. necessarius (strain STIR1).